We begin with the raw amino-acid sequence, 721 residues long: Catalase-peroxidase 1 (721 aa).

The tryptophyl-tyrosyl-methioninium (Trp-Tyr) (with M-249) cross-link spans 98–223 (WHAAGSYRVA…LAAVQMGLIY (126 aa)). Catalysis depends on histidine 99, which acts as the Proton acceptor. A cross-link (tryptophyl-tyrosyl-methioninium (Tyr-Met) (with W-98)) is located at residues 223–249 (YVNPEGVNGQPDPLRTAQDVRVTFGRM). Histidine 264 contacts heme b.

The protein belongs to the peroxidase family. Peroxidase/catalase subfamily. As to quaternary structure, homodimer or homotetramer. Requires heme b as cofactor. In terms of processing, formation of the three residue Trp-Tyr-Met cross-link is important for the catalase, but not the peroxidase activity of the enzyme.

It carries out the reaction H2O2 + AH2 = A + 2 H2O. The enzyme catalyses 2 H2O2 = O2 + 2 H2O. Bifunctional enzyme with both catalase and broad-spectrum peroxidase activity. The sequence is that of Catalase-peroxidase 1 from Legionella pneumophila (strain Paris).